A 166-amino-acid polypeptide reads, in one-letter code: Small ribosomal subunit protein uS5 (166 aa).

An S5 DRBM domain is found at 11–74 (LEDRVVAINR…DAARKNLIEV (64 aa)).

This sequence belongs to the universal ribosomal protein uS5 family. Part of the 30S ribosomal subunit. Contacts proteins S4 and S8.

Functionally, with S4 and S12 plays an important role in translational accuracy. Located at the back of the 30S subunit body where it stabilizes the conformation of the head with respect to the body. The protein is Small ribosomal subunit protein uS5 of Ligilactobacillus salivarius (strain UCC118) (Lactobacillus salivarius).